The primary structure comprises 547 residues: uncharacterized protein (547 aa).

At 1–19 the chain is on the cytoplasmic side; sequence MVRLNHAASYFMPIFCSTR. The helical transmembrane segment at 20–40 threads the bilayer; it reads PHIVILSALFSISLFSLFYAS. Residues 41 to 64 lie on the Vacuolar side of the membrane; the sequence is SELLLHQYDDPLMFKPNSQDYFRT. A helical transmembrane segment spans residues 65–85; that stretch reads FLLGLFSPFLYYFLKTFLFNI. At 86 to 89 the chain is on the cytoplasmic side; sequence NQRF. Residues 90–110 form a helical membrane-spanning segment; sequence LILNLIVDFPINDVFMLLILI. At 111-139 the chain is on the vacuolar side; that stretch reads GLAYPQVQDHEGGTIKHKECSWHIIPRQA. Residues 140–160 form a helical membrane-spanning segment; the sequence is YIFGISWALGEFTICIIGNLF. The Cytoplasmic portion of the chain corresponds to 161-340; sequence NYQEIADPNI…RFIAFSTAYQ (180 aa). Residue S225 is modified to Phosphoserine. The interval 237-271 is disordered; that stretch reads PIKPLRSSSSTYGSIRQQPHENKKQLHVPDNSQDD. Positions 242 to 253 are enriched in polar residues; it reads RSSSSTYGSIRQ. Residues 341–361 traverse the membrane as a helical segment; the sequence is LVTGLLLMILVVGSNIMLTIG. The Vacuolar portion of the chain corresponds to 362–394; that stretch reads ESLILSMYFVYVRGHEGLFTPVVNYFGSRTISN. The helical transmembrane segment at 395-415 threads the bilayer; that stretch reads FILCVIIPFISLNFLINTSIY. The Cytoplasmic portion of the chain corresponds to 416 to 523; that stretch reads LRRELDDWFN…NWRALARNDS (108 aa). A helical membrane pass occupies residues 524–544; that stretch reads FVLGVMVSWSLLVFVTGILST. Over 545 to 547 the chain is Vacuolar; sequence VYI.

It is found in the vacuole membrane. This is an uncharacterized protein from Saccharomyces cerevisiae (strain ATCC 204508 / S288c) (Baker's yeast).